Here is a 546-residue protein sequence, read N- to C-terminus: Chaperonin GroEL (546 aa).

ATP contacts are provided by residues 30–33 (TLGP), K51, 87–91 (DGTTT), G415, and D495.

The protein belongs to the chaperonin (HSP60) family. In terms of assembly, forms a cylinder of 14 subunits composed of two heptameric rings stacked back-to-back. Interacts with the co-chaperonin GroES.

The protein localises to the cytoplasm. The enzyme catalyses ATP + H2O + a folded polypeptide = ADP + phosphate + an unfolded polypeptide.. Together with its co-chaperonin GroES, plays an essential role in assisting protein folding. The GroEL-GroES system forms a nano-cage that allows encapsulation of the non-native substrate proteins and provides a physical environment optimized to promote and accelerate protein folding. The polypeptide is Chaperonin GroEL (Brucella melitensis biotype 1 (strain ATCC 23456 / CCUG 17765 / NCTC 10094 / 16M)).